The sequence spans 109 residues: Large ribosomal subunit protein P1C (109 aa).

Residues 68 to 83 (ASAPTAAGAGAAAPAE) show a composition bias toward low complexity. Residues 68–109 (ASAPTAAGAGAAAPAEAAEEEKKEEAKEEEESDEDMGFGLFD) are disordered. The segment covering 94-103 (KEEEESDEDM) has biased composition (acidic residues). Position 99 is a phosphoserine (Ser99).

This sequence belongs to the eukaryotic ribosomal protein P1/P2 family. Component of the large ribosomal subunit (LSU). Mature yeast ribosomes consist of a small (40S) and a large (60S) subunit. The 40S small subunit contains 1 molecule of ribosomal RNA (18S rRNA) and at least 33 different proteins. The large 60S subunit contains 3 rRNA molecules (25S, 5.8S and 5S rRNA) and at least 46 different proteins. The acidic ribosomal P-proteins form the stalk structure of the 60S subunit. They are organized as a pentameric complex in which uL10/P0 interacts with 2 heterodimers of P1 and P2 proteins.

It is found in the cytoplasm. Functionally, component of the ribosome, a large ribonucleoprotein complex responsible for the synthesis of proteins in the cell. The small ribosomal subunit (SSU) binds messenger RNAs (mRNAs) and translates the encoded message by selecting cognate aminoacyl-transfer RNA (tRNA) molecules. The large subunit (LSU) contains the ribosomal catalytic site termed the peptidyl transferase center (PTC), which catalyzes the formation of peptide bonds, thereby polymerizing the amino acids delivered by tRNAs into a polypeptide chain. The nascent polypeptides leave the ribosome through a tunnel in the LSU and interact with protein factors that function in enzymatic processing, targeting, and the membrane insertion of nascent chains at the exit of the ribosomal tunnel. The chain is Large ribosomal subunit protein P1C (rpp103) from Schizosaccharomyces pombe (strain 972 / ATCC 24843) (Fission yeast).